Reading from the N-terminus, the 141-residue chain is Hemoglobin subunit alpha-A (141 aa).

The region spanning V1–R141 is the Globin domain. H58 lines the O2 pocket. H87 serves as a coordination point for heme b.

It belongs to the globin family. Heterotetramer of two alpha chains and two beta chains. As to expression, red blood cells.

Involved in oxygen transport from the lung to the various peripheral tissues. This is Hemoglobin subunit alpha-A (HBAA) from Phoenicopterus ruber (American flamingo).